Consider the following 452-residue polypeptide: Bifunctional protein GlmU (452 aa).

Residues 1 to 230 (MSRSRSAIIL…ADEVLGVNSR (230 aa)) form a pyrophosphorylase region. UDP-N-acetyl-alpha-D-glucosamine-binding positions include 10–13 (LAAG), lysine 24, glutamine 75, and 80–81 (GT). Aspartate 105 lines the Mg(2+) pocket. UDP-N-acetyl-alpha-D-glucosamine is bound by residues glycine 141, glutamate 156, asparagine 171, and asparagine 228. A Mg(2+)-binding site is contributed by asparagine 228. Residues 231–251 (ADLAEAEAAFQSRMRQSMMAD) form a linker region. Residues 252–452 (GVTLIAPETV…ARKARKDSQT (201 aa)) form an N-acetyltransferase region. UDP-N-acetyl-alpha-D-glucosamine-binding residues include arginine 317 and lysine 335. Residue histidine 347 is the Proton acceptor of the active site. The UDP-N-acetyl-alpha-D-glucosamine site is built by tyrosine 350 and asparagine 361. Residues alanine 364, 370 to 371 (NY), serine 389, threonine 407, and arginine 424 contribute to the acetyl-CoA site.

In the N-terminal section; belongs to the N-acetylglucosamine-1-phosphate uridyltransferase family. This sequence in the C-terminal section; belongs to the transferase hexapeptide repeat family. Homotrimer. Mg(2+) serves as cofactor.

The protein resides in the cytoplasm. It catalyses the reaction alpha-D-glucosamine 1-phosphate + acetyl-CoA = N-acetyl-alpha-D-glucosamine 1-phosphate + CoA + H(+). The enzyme catalyses N-acetyl-alpha-D-glucosamine 1-phosphate + UTP + H(+) = UDP-N-acetyl-alpha-D-glucosamine + diphosphate. It participates in nucleotide-sugar biosynthesis; UDP-N-acetyl-alpha-D-glucosamine biosynthesis; N-acetyl-alpha-D-glucosamine 1-phosphate from alpha-D-glucosamine 6-phosphate (route II): step 2/2. Its pathway is nucleotide-sugar biosynthesis; UDP-N-acetyl-alpha-D-glucosamine biosynthesis; UDP-N-acetyl-alpha-D-glucosamine from N-acetyl-alpha-D-glucosamine 1-phosphate: step 1/1. It functions in the pathway bacterial outer membrane biogenesis; LPS lipid A biosynthesis. Its function is as follows. Catalyzes the last two sequential reactions in the de novo biosynthetic pathway for UDP-N-acetylglucosamine (UDP-GlcNAc). The C-terminal domain catalyzes the transfer of acetyl group from acetyl coenzyme A to glucosamine-1-phosphate (GlcN-1-P) to produce N-acetylglucosamine-1-phosphate (GlcNAc-1-P), which is converted into UDP-GlcNAc by the transfer of uridine 5-monophosphate (from uridine 5-triphosphate), a reaction catalyzed by the N-terminal domain. This is Bifunctional protein GlmU from Maricaulis maris (strain MCS10) (Caulobacter maris).